Reading from the N-terminus, the 1162-residue chain is Nucleoporin nup132 (1162 aa).

Belongs to the nucleoporin Nup133 family. As to quaternary structure, component of the npc107-120 complex which consists of nup85, nup107, nup120, nup131, nup132 and seh1. Interacts with nup107.

Its subcellular location is the nucleus envelope. Functions as a component of the nuclear pore complex (NPC). NPC components, collectively referred to as nucleoporins (NUPs), can play the role of both NPC structural components and of docking or interaction partners for transiently associated nuclear transport factors. Active directional transport is assured by both, a Phe-Gly (FG) repeat affinity gradient for these transport factors across the NPC and a transport cofactor concentration gradient across the nuclear envelope. The polypeptide is Nucleoporin nup132 (nup132) (Schizosaccharomyces pombe (strain 972 / ATCC 24843) (Fission yeast)).